Here is a 243-residue protein sequence, read N- to C-terminus: UPF0246 protein M6_Spy1787 (243 aa).

Belongs to the UPF0246 family.

This is UPF0246 protein M6_Spy1787 from Streptococcus pyogenes serotype M6 (strain ATCC BAA-946 / MGAS10394).